The chain runs to 98 residues: NADH-ubiquinone oxidoreductase chain 4L (98 aa).

3 consecutive transmembrane segments (helical) span residues 1–21, 29–49, and 61–81; these read MSLV…GLLM, SLLC…LTIL, and IILL…LVMV.

It belongs to the complex I subunit 4L family. Core subunit of respiratory chain NADH dehydrogenase (Complex I) which is composed of 45 different subunits.

It localises to the mitochondrion inner membrane. The catalysed reaction is a ubiquinone + NADH + 5 H(+)(in) = a ubiquinol + NAD(+) + 4 H(+)(out). Functionally, core subunit of the mitochondrial membrane respiratory chain NADH dehydrogenase (Complex I) which catalyzes electron transfer from NADH through the respiratory chain, using ubiquinone as an electron acceptor. Part of the enzyme membrane arm which is embedded in the lipid bilayer and involved in proton translocation. This is NADH-ubiquinone oxidoreductase chain 4L (MT-ND4L) from Rangifer tarandus (Reindeer).